Consider the following 227-residue polypeptide: Deoxyribose-phosphate aldolase (227 aa).

Asp-98 acts as the Proton donor/acceptor in catalysis. Lys-161 acts as the Schiff-base intermediate with acetaldehyde in catalysis. The active-site Proton donor/acceptor is Lys-191.

The protein belongs to the DeoC/FbaB aldolase family. DeoC type 1 subfamily.

The protein localises to the cytoplasm. It carries out the reaction 2-deoxy-D-ribose 5-phosphate = D-glyceraldehyde 3-phosphate + acetaldehyde. The protein operates within carbohydrate degradation; 2-deoxy-D-ribose 1-phosphate degradation; D-glyceraldehyde 3-phosphate and acetaldehyde from 2-deoxy-alpha-D-ribose 1-phosphate: step 2/2. Its function is as follows. Catalyzes a reversible aldol reaction between acetaldehyde and D-glyceraldehyde 3-phosphate to generate 2-deoxy-D-ribose 5-phosphate. The sequence is that of Deoxyribose-phosphate aldolase from Frankia alni (strain DSM 45986 / CECT 9034 / ACN14a).